The chain runs to 109 residues: RNA-binding protein Hfq (109 aa).

Residues 9 to 68 form the Sm domain; the sequence is DPFLNALRKEKVSVSVYLVNGIKLQGQVEAFDQFCIVLRNTVNQMVYKHAISTIVPAKSV. The segment at 77 to 109 is disordered; sequence PYHQNSNDEQDENVDDIHSDDLEIQENEGNIHE.

Belongs to the Hfq family. As to quaternary structure, homohexamer.

Its function is as follows. RNA chaperone that binds small regulatory RNA (sRNAs) and mRNAs to facilitate mRNA translational regulation in response to envelope stress, environmental stress and changes in metabolite concentrations. Also binds with high specificity to tRNAs. The sequence is that of RNA-binding protein Hfq from Francisella tularensis subsp. holarctica (strain FTNF002-00 / FTA).